We begin with the raw amino-acid sequence, 295 residues long: Nucleotide-binding protein RBAM_031990 (295 aa).

Position 16 to 23 (16 to 23 (GMSGAGKT)) interacts with ATP. Residue 67-70 (DLRG) participates in GTP binding.

This sequence belongs to the RapZ-like family.

Its function is as follows. Displays ATPase and GTPase activities. This is Nucleotide-binding protein RBAM_031990 from Bacillus velezensis (strain DSM 23117 / BGSC 10A6 / LMG 26770 / FZB42) (Bacillus amyloliquefaciens subsp. plantarum).